Reading from the N-terminus, the 238-residue chain is Serine protease SplE (238 aa).

The signal sequence occupies residues 1-36 (MNKNIIIKSIAALTILTSVTGVGTTVVEGIQQTAKA). Active-site charge relay system residues include His75, Asp113, and Ser191.

Belongs to the peptidase S1B family.

It is found in the secreted. This chain is Serine protease SplE (splE), found in Staphylococcus aureus (strain USA300).